We begin with the raw amino-acid sequence, 904 residues long: DNA mismatch repair protein MutS (904 aa).

Residue 655 to 662 (GPNMGGKS) participates in ATP binding.

The protein belongs to the DNA mismatch repair MutS family.

Its function is as follows. This protein is involved in the repair of mismatches in DNA. It is possible that it carries out the mismatch recognition step. This protein has a weak ATPase activity. This is DNA mismatch repair protein MutS from Agrobacterium fabrum (strain C58 / ATCC 33970) (Agrobacterium tumefaciens (strain C58)).